Consider the following 259-residue polypeptide: Cytosolic Fe-S cluster assembly factor Nubp2 homolog (259 aa).

14-21 serves as a coordination point for ATP; sequence GKGGVGKS. The [4Fe-4S] cluster site is built by C188 and C191.

It belongs to the Mrp/NBP35 ATP-binding proteins family. NUBP2/CFD1 subfamily. In terms of assembly, heterotetramer of 2 Nubp1 and 2 Nubp2 chains. The cofactor is [4Fe-4S] cluster.

The protein resides in the cytoplasm. In terms of biological role, component of the cytosolic iron-sulfur (Fe/S) protein assembly (CIA) machinery. Required for maturation of extramitochondrial Fe-S proteins. The Nubp1-Nubp2 heterotetramer forms a Fe-S scaffold complex, mediating the de novo assembly of an Fe-S cluster and its transfer to target apoproteins. The sequence is that of Cytosolic Fe-S cluster assembly factor Nubp2 homolog from Aedes aegypti (Yellowfever mosquito).